Consider the following 277-residue polypeptide: Glucose-6-phosphatase catalytic subunit 1 (277 aa).

Residue arginine 4 participates in substrate binding. The next 2 helical transmembrane spans lie at 39–59 (GHAM…LSIA) and 67–87 (LLYR…ELVV). The active-site Proton donor is the histidine 40. Substrate is bound at residue arginine 91. Histidine 97 (nucleophile) is an active-site residue. 3 helical membrane-spanning segments follow: residues 131-151 (FLIT…LKAL), 215-235 (IGCI…TFSP), and 250-270 (AVAL…IYPV). A Prevents secretion from ER motif is present at residues 274–277 (GKNL).

The protein belongs to the glucose-6-phosphatase family.

It is found in the endoplasmic reticulum membrane. It catalyses the reaction D-glucose 6-phosphate + H2O = D-glucose + phosphate. Its pathway is carbohydrate biosynthesis; gluconeogenesis. Functionally, hydrolyzes glucose-6-phosphate to glucose in the endoplasmic reticulum. Forms with the glucose-6-phosphate transporter (SLC37A4/G6PT) the complex responsible for glucose production in the terminal step of glycogenolysis and gluconeogenesis. Hence, it is the key enzyme in homeostatic regulation of blood glucose levels. The polypeptide is Glucose-6-phosphatase catalytic subunit 1 (g6pc1) (Haplochromis xenognathus (Lake Victoria cichlid)).